A 332-amino-acid polypeptide reads, in one-letter code: Oligopeptide transport ATP-binding protein OppF (332 aa).

In terms of domain architecture, ABC transporter spans 23 to 264; the sequence is KNDKSLFFAK…TKHPYTKALM (242 aa). Position 56–63 (56–63) interacts with ATP; that stretch reads GESGCGKS.

The protein belongs to the ABC transporter superfamily. As to quaternary structure, the complex is composed of two ATP-binding proteins (OppD and OppF), two transmembrane proteins (OppB and OppC) and a solute-binding protein (OppA).

It localises to the cell inner membrane. It catalyses the reaction a [peptide](out) + ATP + H2O = a [peptide](in) + ADP + phosphate + H(+). Functionally, part of the ABC transporter complex OppABCDF involved in the uptake of oligopeptides. Probably responsible for energy coupling to the transport system. This is Oligopeptide transport ATP-binding protein OppF (oppF) from Haemophilus influenzae (strain ATCC 51907 / DSM 11121 / KW20 / Rd).